The primary structure comprises 1442 residues: DNA polymerase III PolC-type (1442 aa).

The 160-residue stretch at 409–568 (YVIFDIETTG…YDAIVLADVF (160 aa)) folds into the Exonuclease domain.

Belongs to the DNA polymerase type-C family. PolC subfamily.

The protein localises to the cytoplasm. It carries out the reaction DNA(n) + a 2'-deoxyribonucleoside 5'-triphosphate = DNA(n+1) + diphosphate. In terms of biological role, required for replicative DNA synthesis. This DNA polymerase also exhibits 3' to 5' exonuclease activity. The sequence is that of DNA polymerase III PolC-type from Ureaplasma parvum serovar 3 (strain ATCC 700970).